Reading from the N-terminus, the 235-residue chain is Glycerol-3-phosphate acyltransferase (235 aa).

6 helical membrane-spanning segments follow: residues 4-24, 56-76, 94-114, 122-142, 152-172, and 191-211; these read LLAILAVSYIIGSIPTSLVAG, VVTLIDIVKGVVAAVSVVAFF, LLAGMSAVIGHVFTLFAGFKG, AGMLIGIAPVSMLMVVGIFLL, VASMLAAIAFPLIIAIRKYIF, and FHDSLDYHLMIFGLIVALAIL.

Belongs to the PlsY family. Probably interacts with PlsX.

It is found in the cell inner membrane. It carries out the reaction an acyl phosphate + sn-glycerol 3-phosphate = a 1-acyl-sn-glycero-3-phosphate + phosphate. Its pathway is lipid metabolism; phospholipid metabolism. Functionally, catalyzes the transfer of an acyl group from acyl-phosphate (acyl-PO(4)) to glycerol-3-phosphate (G3P) to form lysophosphatidic acid (LPA). This enzyme utilizes acyl-phosphate as fatty acyl donor, but not acyl-CoA or acyl-ACP. The protein is Glycerol-3-phosphate acyltransferase of Pelodictyon phaeoclathratiforme (strain DSM 5477 / BU-1).